A 196-amino-acid chain; its full sequence is Beta-crystallin A2 (196 aa).

The N-terminal arm stretch occupies residues 1 to 11 (MTSEAMDTLGQ). 2 Beta/gamma crystallin 'Greek key' domains span residues 12–51 (YKIT…KVES) and 52–98 (GPWV…RPVK). The connecting peptide stretch occupies residues 99 to 104 (CANHND). 2 consecutive Beta/gamma crystallin 'Greek key' domains span residues 105–146 (SKAI…KVNA) and 147–195 (GAWV…RRIQ).

The protein belongs to the beta/gamma-crystallin family. Homo/heterodimer, or complexes of higher-order. The structure of beta-crystallin oligomers seems to be stabilized through interactions between the N-terminal arms.

Crystallins are the dominant structural components of the vertebrate eye lens. The sequence is that of Beta-crystallin A2 (CRYBA2) from Gallus gallus (Chicken).